We begin with the raw amino-acid sequence, 357 residues long: Uroporphyrinogen decarboxylase (357 aa).

Residues 30 to 34 (RQAGR), Asp-79, Tyr-154, Ser-209, and His-336 each bind substrate.

The protein belongs to the uroporphyrinogen decarboxylase family. Homodimer.

The protein localises to the cytoplasm. It catalyses the reaction uroporphyrinogen III + 4 H(+) = coproporphyrinogen III + 4 CO2. It functions in the pathway porphyrin-containing compound metabolism; protoporphyrin-IX biosynthesis; coproporphyrinogen-III from 5-aminolevulinate: step 4/4. Its function is as follows. Catalyzes the decarboxylation of four acetate groups of uroporphyrinogen-III to yield coproporphyrinogen-III. The protein is Uroporphyrinogen decarboxylase of Mycobacterium bovis (strain ATCC BAA-935 / AF2122/97).